We begin with the raw amino-acid sequence, 738 residues long: 1,4-alpha-glucan branching enzyme GlgB (738 aa).

Aspartate 399 serves as the catalytic Nucleophile. The active-site Proton donor is the glutamate 452.

It belongs to the glycosyl hydrolase 13 family. GlgB subfamily. In terms of assembly, monomer.

The catalysed reaction is Transfers a segment of a (1-&gt;4)-alpha-D-glucan chain to a primary hydroxy group in a similar glucan chain.. It functions in the pathway glycan biosynthesis; glycogen biosynthesis. Functionally, catalyzes the formation of the alpha-1,6-glucosidic linkages in glycogen by scission of a 1,4-alpha-linked oligosaccharide from growing alpha-1,4-glucan chains and the subsequent attachment of the oligosaccharide to the alpha-1,6 position. The chain is 1,4-alpha-glucan branching enzyme GlgB from Chlamydia trachomatis serovar D (strain ATCC VR-885 / DSM 19411 / UW-3/Cx).